The following is a 161-amino-acid chain: Protein-lysine N-methyltransferase (161 aa).

A DxGxGxG SAM-binding motif motif is present at residues 34–40 (DLGCGDG).

The protein belongs to the class I-like SAM-binding methyltransferase superfamily. As to quaternary structure, monomer.

It carries out the reaction L-lysyl-[protein] + S-adenosyl-L-methionine = N(6)-methyl-L-lysyl-[protein] + S-adenosyl-L-homocysteine + H(+). Functionally, catalyzes the methylation of lysine residues in target proteins, using S-adenosyl-L-methionine (SAM) as the methyl donor. Exhibits broad substrate specificity, being able to methylate the crenarchaeal chromatin protein Cren7 primarily at 'Lys-11', 'Lys-16' and 'Lys-31', as well as a number of recombinant Sulfolobus proteins in vitro. Methylates lysine residues in a rather sequence-independent manner. The polypeptide is Protein-lysine N-methyltransferase (Saccharolobus islandicus (strain REY15A) (Sulfolobus islandicus)).